The sequence spans 239 residues: Probable transcriptional regulatory protein ABO_1803 (239 aa).

Belongs to the TACO1 family.

The protein localises to the cytoplasm. This is Probable transcriptional regulatory protein ABO_1803 from Alcanivorax borkumensis (strain ATCC 700651 / DSM 11573 / NCIMB 13689 / SK2).